Reading from the N-terminus, the 731-residue chain is Polyribonucleotide nucleotidyltransferase (731 aa).

Mg(2+)-binding residues include Asp-488 and Asp-494. The region spanning 555–614 (PRIEVINIAVDKIRDVIGSGGKVIREIVEQTGAKINIEDDGTIKIASADAKTIEAAKRWI) is the KH domain. The S1 motif domain maps to 624–692 (GAIYQGTVVK…ERGKVRLSMK (69 aa)). A disordered region spans residues 693–731 (AVDQKTGKEMTDDKSVKEEKCMDEKKQPENKRRRKKKEE). Residues 694–722 (VDQKTGKEMTDDKSVKEEKCMDEKKQPEN) are compositionally biased toward basic and acidic residues.

Belongs to the polyribonucleotide nucleotidyltransferase family. The cofactor is Mg(2+).

The protein resides in the cytoplasm. The catalysed reaction is RNA(n+1) + phosphate = RNA(n) + a ribonucleoside 5'-diphosphate. Functionally, involved in mRNA degradation. Catalyzes the phosphorolysis of single-stranded polyribonucleotides processively in the 3'- to 5'-direction. This Bartonella tribocorum (strain CIP 105476 / IBS 506) protein is Polyribonucleotide nucleotidyltransferase.